The chain runs to 21 residues: FGLPMLSILPKALCILLKRKC.

An intrachain disulfide couples C14 to C21.

As to expression, expressed by the skin glands.

It is found in the secreted. In terms of biological role, antibacterial activity against the Gram-negative bacterium E.coli and the Gram-positive bacterium S.aureus. This Rana japonica (Japanese reddish frog) protein is Japonicin-2.